Reading from the N-terminus, the 330-residue chain is MGAILSTPKTPIEVRRKRIVPLFRANHTRFRPVDEKNRINAVPLLLLGCLYGKYKDDDFVDFFDKAIPLLVPQTHKGLDTYEIDVSTYKTHIGHPKFIEPFVLFYGDRLVHDARYNLHELVWQTLSRNPEYIKGLCYDSCTPLANLAVGLSLNIQEVLIDCFATAACFTTEDTSINPIPTLPSVFCTIVDDEGISLKELLYIIEESLLKNAIPDPFSVSTYTLKSAFEHLVKKDFLKYYTAYLASSAVDYIDAYFTESFGSFFISRLASQFLVSFQTLPSFFSFPLVTDNWQHLAALPFNSTYETFRAFDHPSTNGPAIGPLYNAAPAPR.

This is an uncharacterized protein from Schizosaccharomyces pombe (strain 972 / ATCC 24843) (Fission yeast).